Here is a 401-residue protein sequence, read N- to C-terminus: L-rhamnonate dehydratase (401 aa).

Positions 29 and 55 each coordinate substrate. Asp222, Glu248, and Glu276 together coordinate Mg(2+). The active-site Proton acceptor is the His325. Glu345 is a binding site for substrate.

Belongs to the mandelate racemase/muconate lactonizing enzyme family. RhamD subfamily. In terms of assembly, homooctamer; tetramer of dimers. Mg(2+) serves as cofactor.

It carries out the reaction L-rhamnonate = 2-dehydro-3-deoxy-L-rhamnonate + H2O. Catalyzes the dehydration of L-rhamnonate to 2-keto-3-deoxy-L-rhamnonate (KDR). The chain is L-rhamnonate dehydratase from Klebsiella pneumoniae subsp. pneumoniae (strain ATCC 700721 / MGH 78578).